A 115-amino-acid chain; its full sequence is Tyrosine-protein phosphatase 19 (115 aa).

The Tyrosine-protein phosphatase domain maps to 1–115 (WLMIVEQKCR…ETGSDAPMVV (115 aa)). Substrate is bound at residue D83.

Belongs to the protein-tyrosine phosphatase family.

It carries out the reaction O-phospho-L-tyrosyl-[protein] + H2O = L-tyrosyl-[protein] + phosphate. The chain is Tyrosine-protein phosphatase 19 (STY-19) from Styela plicata (Wrinkled sea squirt).